The following is a 188-amino-acid chain: Probable manganese efflux pump MntP (188 aa).

Helical transmembrane passes span 3 to 23 (YTAT…ASIG), 41 to 61 (LIFG…GILA), 66 to 86 (LEWN…RMII), 106 to 128 (WLLV…GLAF), 143 to 163 (ATLI…PMLG), and 168 to 188 (ILGG…HFHG).

Belongs to the MntP (TC 9.B.29) family.

The protein localises to the cell inner membrane. Its function is as follows. Probably functions as a manganese efflux pump. The sequence is that of Probable manganese efflux pump MntP from Salmonella heidelberg (strain SL476).